The sequence spans 110 residues: uncharacterized protein (110 aa).

Positions 16-46 form a coiled coil; the sequence is ELDKLRECEERLSVIEKQKQSSKQESEETYI. Residues 85 to 96 are compositionally biased toward basic and acidic residues; sequence EEKDKKCQRKPE. The tract at residues 85 to 110 is disordered; it reads EEKDKKCQRKPEAPSTPAVTIRSKRQ.

This is an uncharacterized protein from Bacillus subtilis (strain 168).